The chain runs to 590 residues: L-gulonolactone oxidase 5 (590 aa).

The N-terminal stretch at 1-31 is a signal peptide; that stretch reads MAFGYSPSYCSFWRTLLGLYCLFTLVHTVIS. The FAD-binding PCMH-type domain maps to 60–242; it reads STCRAANVAY…SQVTFELQPM (183 aa).

Belongs to the oxygen-dependent FAD-linked oxidoreductase family. The cofactor is FAD.

The catalysed reaction is L-gulono-1,4-lactone + O2 = L-ascorbate + H2O2 + H(+). It functions in the pathway cofactor biosynthesis; L-ascorbate biosynthesis. In terms of biological role, catalyzes the oxidation of L-gulono-1,4-lactone to ascorbic acid. L-gulono-1,4-lactone is oxidized to hydrogen peroxide and L-xylo-hexulonolactone which spontaneously isomerizes to L-ascorbate. The sequence is that of L-gulonolactone oxidase 5 from Arabidopsis thaliana (Mouse-ear cress).